The sequence spans 376 residues: Homeobox protein extradenticle (376 aa).

The tract at residues 1-37 is disordered; the sequence is MEDPNRMLAHTGGMMAPQGYGLSGQDDGQNAGSENEV. The PBC domain maps to 38 to 237; sequence RKQKDIGEIL…VMILRSRFLD (200 aa). The tract at residues 45 to 124 is PBC-A; that stretch reads EILQQIMSIS…EGVAGPEKGG (80 aa). The segment at 127–237 is PBC-B; that stretch reads AAAASAAAAS…VMILRSRFLD (111 aa). A DNA-binding region (homeobox; TALE-type) is located at residues 238–300; that stretch reads ARRKRRNFSK…NKRIRYKKNI (63 aa). Positions 318-335 are enriched in low complexity; the sequence is ASPYSMAGPPSGTTTPMM. Positions 318–376 are disordered; that stretch reads ASPYSMAGPPSGTTTPMMSPAPPQDSMGYPMGSGGYDQQQPYDNSMGGYDPNLHQDLSP.

It belongs to the TALE/PBX homeobox family. In terms of assembly, interacts with Ubx and hth. As to expression, prior to full germband retraction it is ubiquitously present, after germband retraction, mostly present in the anterior portion of the ventral nerve cord.

It localises to the nucleus. In terms of biological role, transcription factor which acts with the selector homeodomain proteins altering the regulation of downstream target genes such as wingless (wg), teashirt (tsh) and decapentaplegic (dpp), thus affecting segmental identity. Delimits the eye field and prevent inappropriate eye development. Required for proper localization of chordotonal organs within the peripheral nervous system. This Drosophila melanogaster (Fruit fly) protein is Homeobox protein extradenticle (exd).